The following is a 200-amino-acid chain: NADH-quinone oxidoreductase subunit C (200 aa).

It belongs to the complex I 30 kDa subunit family. NDH-1 is composed of 14 different subunits. Subunits NuoB, C, D, E, F, and G constitute the peripheral sector of the complex.

The protein resides in the cell inner membrane. It carries out the reaction a quinone + NADH + 5 H(+)(in) = a quinol + NAD(+) + 4 H(+)(out). Functionally, NDH-1 shuttles electrons from NADH, via FMN and iron-sulfur (Fe-S) centers, to quinones in the respiratory chain. The immediate electron acceptor for the enzyme in this species is believed to be ubiquinone. Couples the redox reaction to proton translocation (for every two electrons transferred, four hydrogen ions are translocated across the cytoplasmic membrane), and thus conserves the redox energy in a proton gradient. The sequence is that of NADH-quinone oxidoreductase subunit C from Agrobacterium fabrum (strain C58 / ATCC 33970) (Agrobacterium tumefaciens (strain C58)).